The sequence spans 190 residues: Cathelicidin-3 (190 aa).

A signal peptide spans 1–29 (METQMASPSLGRCSLWLLLLGLLLPSASA). Gln30 carries the pyrrolidone carboxylic acid modification. Residues 30-130 (QALSYREAVL…DLNCNELQSV (101 aa)) constitute a propeptide that is removed on maturation. Intrachain disulfides connect Cys85–Cys96 and Cys107–Cys124. The segment covering 133-151 (LRPRRPRLPRPRPRPRPRP) has biased composition (basic residues). The segment at 133 to 190 (LRPRRPRLPRPRPRPRPRPRSLPLPRPQPRRIPRPILLPWRPPRPIPRPQPQPIPRWL) is disordered. Over residues 172–190 (WRPPRPIPRPQPQPIPRWL) the composition is skewed to pro residues.

It belongs to the cathelicidin family.

It is found in the secreted. Exerts, in vitro, a potent antimicrobial activity. Probably due to an impairment of the function of the respiratory chain and of energy-dependent activities in the inner membrane of susceptible microorganisms. This is Cathelicidin-3 (CATHL3) from Ovis aries (Sheep).